A 198-amino-acid polypeptide reads, in one-letter code: V-type ATP synthase subunit E (198 aa).

Belongs to the V-ATPase E subunit family.

In terms of biological role, produces ATP from ADP in the presence of a proton gradient across the membrane. This is V-type ATP synthase subunit E from Clostridium novyi (strain NT).